A 1047-amino-acid polypeptide reads, in one-letter code: Oleate-activated transcription factor 1 (1047 aa).

Residues methionine 1–asparagine 56 form a disordered region. The zn(2)-C6 fungal-type DNA-binding region spans cysteine 66–cysteine 93. The tract at residues arginine 133 to lysine 163 is disordered. The segment covering serine 144–serine 155 has biased composition (polar residues). Phosphoserine is present on serine 155. The 9aaTAD signature appears at aspartate 1034–phenylalanine 1042.

Heterodimer of PIP2 and OAF1.

Its subcellular location is the nucleus. The PIP2-OAF1 heterodimer acts as a transcriptional activator to induce the transcription of genes encoding proteins involved in fatty acid beta-oxidation, a response called oleic acid induction, when cells grow on fatty acids as sole carbon source. Recognizes and binds to the oleate response element (ORE) (or peroxisome box), two inverted CGG triplets spaced by 14 to 18 intervening nucleotides, in the promoter region of a number of genes (such as CTA1, FOX1 to FOX3, FAA2, PAS8, PAS10, etc.) for peroxisomal proteins. OAF1 acts as the sensor for oleate and inhibits PIP2 activity under non-inducing conditions. Activity is repressed by glucose. This is Oleate-activated transcription factor 1 (OAF1) from Saccharomyces cerevisiae (strain ATCC 204508 / S288c) (Baker's yeast).